The primary structure comprises 277 residues: Cis-3,4-dihydrophenanthrene-3,4-diol dehydrogenase (277 aa).

NAD(+) contacts are provided by residues 10–37 (FLTG…TVLD) and D60. Residue S143 coordinates substrate. Catalysis depends on Y156, which acts as the Proton acceptor. NAD(+) is bound at residue K160.

The protein belongs to the short-chain dehydrogenases/reductases (SDR) family. In terms of assembly, homotetramer.

It carries out the reaction (3S,4R)-3,4-dihydrophenanthrene-3,4-diol + NAD(+) = phenanthrene-3,4-diol + NADH + H(+). With respect to regulation, inhibited by heavy metal such as Hg(2+) and by p-chloromercuribenzoate. Involved in the degradation of phenanthrene. Catalyzes the oxidation of cis-phenanthrene dihydrodiol (PDD) to yield phenanthrenediol. It can use either NAD or NADP as electron acceptor, however NAD is preferred to NADP. The chain is Cis-3,4-dihydrophenanthrene-3,4-diol dehydrogenase (phnB) from Alcaligenes faecalis.